The sequence spans 255 residues: Acetyl-coenzyme A carboxylase carboxyl transferase subunit alpha (255 aa).

One can recognise a CoA carboxyltransferase C-terminal domain in the interval M1–R235.

The protein belongs to the AccA family. Acetyl-CoA carboxylase is a heterohexamer composed of biotin carboxyl carrier protein (AccB), biotin carboxylase (AccC) and two subunits each of ACCase subunit alpha (AccA) and ACCase subunit beta (AccD).

It is found in the cytoplasm. The catalysed reaction is N(6)-carboxybiotinyl-L-lysyl-[protein] + acetyl-CoA = N(6)-biotinyl-L-lysyl-[protein] + malonyl-CoA. The protein operates within lipid metabolism; malonyl-CoA biosynthesis; malonyl-CoA from acetyl-CoA: step 1/1. Functionally, component of the acetyl coenzyme A carboxylase (ACC) complex. First, biotin carboxylase catalyzes the carboxylation of biotin on its carrier protein (BCCP) and then the CO(2) group is transferred by the carboxyltransferase to acetyl-CoA to form malonyl-CoA. The sequence is that of Acetyl-coenzyme A carboxylase carboxyl transferase subunit alpha from Streptococcus pneumoniae serotype 2 (strain D39 / NCTC 7466).